The following is a 296-amino-acid chain: Lipoyl synthase (296 aa).

Positions 37, 42, 48, 63, 67, 70, and 276 each coordinate [4Fe-4S] cluster. A Radical SAM core domain is found at 49–265 (WSKKHTTVMI…ERVAKTKGFL (217 aa)).

The protein belongs to the radical SAM superfamily. Lipoyl synthase family. [4Fe-4S] cluster serves as cofactor.

Its subcellular location is the cytoplasm. The catalysed reaction is [[Fe-S] cluster scaffold protein carrying a second [4Fe-4S](2+) cluster] + N(6)-octanoyl-L-lysyl-[protein] + 2 oxidized [2Fe-2S]-[ferredoxin] + 2 S-adenosyl-L-methionine + 4 H(+) = [[Fe-S] cluster scaffold protein] + N(6)-[(R)-dihydrolipoyl]-L-lysyl-[protein] + 4 Fe(3+) + 2 hydrogen sulfide + 2 5'-deoxyadenosine + 2 L-methionine + 2 reduced [2Fe-2S]-[ferredoxin]. It functions in the pathway protein modification; protein lipoylation via endogenous pathway; protein N(6)-(lipoyl)lysine from octanoyl-[acyl-carrier-protein]: step 2/2. Its function is as follows. Catalyzes the radical-mediated insertion of two sulfur atoms into the C-6 and C-8 positions of the octanoyl moiety bound to the lipoyl domains of lipoate-dependent enzymes, thereby converting the octanoylated domains into lipoylated derivatives. The sequence is that of Lipoyl synthase from Rickettsia conorii (strain ATCC VR-613 / Malish 7).